We begin with the raw amino-acid sequence, 449 residues long: UDP-N-acetylmuramoylalanine--D-glutamate ligase (449 aa).

118–124 (GTNGKTT) provides a ligand contact to ATP.

It belongs to the MurCDEF family.

Its subcellular location is the cytoplasm. The enzyme catalyses UDP-N-acetyl-alpha-D-muramoyl-L-alanine + D-glutamate + ATP = UDP-N-acetyl-alpha-D-muramoyl-L-alanyl-D-glutamate + ADP + phosphate + H(+). It participates in cell wall biogenesis; peptidoglycan biosynthesis. Functionally, cell wall formation. Catalyzes the addition of glutamate to the nucleotide precursor UDP-N-acetylmuramoyl-L-alanine (UMA). The chain is UDP-N-acetylmuramoylalanine--D-glutamate ligase from Staphylococcus saprophyticus subsp. saprophyticus (strain ATCC 15305 / DSM 20229 / NCIMB 8711 / NCTC 7292 / S-41).